A 156-amino-acid polypeptide reads, in one-letter code: ATP synthase subunit b (156 aa).

The chain crosses the membrane as a helical span at residues 3–23 (ITFTIFAQSLAFAALIWIVAT).

It belongs to the ATPase B chain family. In terms of assembly, F-type ATPases have 2 components, F(1) - the catalytic core - and F(0) - the membrane proton channel. F(1) has five subunits: alpha(3), beta(3), gamma(1), delta(1), epsilon(1). F(0) has three main subunits: a(1), b(2) and c(10-14). The alpha and beta chains form an alternating ring which encloses part of the gamma chain. F(1) is attached to F(0) by a central stalk formed by the gamma and epsilon chains, while a peripheral stalk is formed by the delta and b chains.

It localises to the cell inner membrane. F(1)F(0) ATP synthase produces ATP from ADP in the presence of a proton or sodium gradient. F-type ATPases consist of two structural domains, F(1) containing the extramembraneous catalytic core and F(0) containing the membrane proton channel, linked together by a central stalk and a peripheral stalk. During catalysis, ATP synthesis in the catalytic domain of F(1) is coupled via a rotary mechanism of the central stalk subunits to proton translocation. Its function is as follows. Component of the F(0) channel, it forms part of the peripheral stalk, linking F(1) to F(0). This Xylella fastidiosa (strain 9a5c) protein is ATP synthase subunit b.